Here is an 869-residue protein sequence, read N- to C-terminus: Aminopeptidase N (869 aa).

Substrate contacts are provided by residues Glu122 and 262–266; that span reads GAMEN. His298 provides a ligand contact to Zn(2+). Glu299 (proton acceptor) is an active-site residue. The Zn(2+) site is built by His302 and Glu321.

It belongs to the peptidase M1 family. The cofactor is Zn(2+).

Its subcellular location is the cell inner membrane. It carries out the reaction Release of an N-terminal amino acid, Xaa-|-Yaa- from a peptide, amide or arylamide. Xaa is preferably Ala, but may be most amino acids including Pro (slow action). When a terminal hydrophobic residue is followed by a prolyl residue, the two may be released as an intact Xaa-Pro dipeptide.. Its function is as follows. Aminopeptidase N is involved in the degradation of intracellular peptides generated by protein breakdown during normal growth as well as in response to nutrient starvation. This Haemophilus influenzae (strain ATCC 51907 / DSM 11121 / KW20 / Rd) protein is Aminopeptidase N (pepN).